Consider the following 777-residue polypeptide: Cyclin-F (777 aa).

Positions 20–28 (KRRIKRRPR) match the Nuclear localization signal 1 motif. One can recognise an F-box domain in the interval 29-76 (NLTILSLPEDVLFHILKWLSVGDILAVRAVHSHLKYLVDNHASVWASA). The 118-residue stretch at 288–405 (QASQAVNKQQ…EIISALEGKI (118 aa)) folds into the Cyclin N-terminal domain. 3 consecutive short sequence motifs (d box) follow at residues 310-313 (RYIL), 343-346 (RRRL), and 349-352 (RYKL). Disordered stretches follow at residues 544 to 591 (QESP…TPTA) and 651 to 777 (QESS…HLAS). A Nuclear localization signal 2 motif is present at residues 568 to 574 (RRSKRKR). Positions 582–761 (RGSFVTTPTA…ESGVHQQPVK (180 aa)) are PEST. 2 stretches are compositionally biased toward low complexity: residues 695 to 708 (SGYSSVSSSSPISS) and 719 to 731 (STSVLSVGSHSST). Over residues 751–767 (PESGVHQQPVKRQNLSV) the composition is skewed to polar residues. The D box 4 motif lies at 762–765 (RQNL). The segment covering 768 to 777 (HSDKDMHLAS) has biased composition (basic and acidic residues).

It belongs to the cyclin family. Cyclin AB subfamily. In terms of assembly, component of the SCF(CCNF) complex consisting of CUL1, RBX1, SKP1 and CCNF. Interacts with SKP1. Interacts with CUL1. Interacts with CCNB1; interaction is required for nuclear localization of CCNB1. Interacts with CCP110; this interaction leads to CCP110 ubiquitination and degradation via the proteasome pathway. Interacts (via the Cyclin N-terminal domain) with MYBL2/BMYB. Interacts with FZR1/CDH1 (via N-terminus). Interacts with RRM2 (via Cy motif and when phosphorylated at 'Thr-33'); the interaction occurs exclusively in G2 and early M. Interacts with CDC6 (via Cy motif); the interaction takes place during G2 and M phase. Degraded when the spindle assembly checkpoint is activated during the G2-M transition. Degradation is not dependent on the proteasome or ubiquitin and depends on the C-terminal PEST sequence. In terms of processing, phosphorylated just before cells enter into mitosis. Post-translationally, ubiquitinated by the anaphase-promoting complex (APC/C); leading to its degradation by the proteasome.

It localises to the nucleus. The protein localises to the cytoplasm. Its subcellular location is the perinuclear region. It is found in the cytoskeleton. The protein resides in the microtubule organizing center. It localises to the centrosome. The protein localises to the centriole. In terms of biological role, substrate recognition component of a SCF (SKP1-CUL1-F-box protein) E3 ubiquitin-protein ligase complex which mediates the ubiquitination and subsequent proteasomal degradation of target proteins. The SCF(CCNF) E3 ubiquitin-protein ligase complex is an integral component of the ubiquitin proteasome system (UPS) and links proteasome degradation to the cell cycle. Mediates the substrate recognition and the proteasomal degradation of various target proteins involved in the regulation of cell cycle progression and in the maintenance of genome stability. Mediates the ubiquitination and subsequent proteasomal degradation of CP110 during G2 phase, thereby acting as an inhibitor of centrosome reduplication. In G2, mediates the ubiquitination and proteasomal degradation of CDC6, thereby suppressing DNA re-replication and preventing genome instability. Involved in the ubiquitination and degradation of the substrate adapter CDH1 of the anaphase-promoting complex (APC/C), thereby acting as an antagonist of APC/C in regulating G1 progression and S phase entry. May play a role in the G2 cell cycle checkpoint control after DNA damage, possibly by promoting the ubiquitination of MYBL2/BMYB. In Mus musculus (Mouse), this protein is Cyclin-F (Ccnf).